Here is a 197-residue protein sequence, read N- to C-terminus: Recombination protein RecR (197 aa).

A C4-type zinc finger spans residues 56–71 (CQQCRTLTEQALCNIC). A Toprim domain is found at 79–174 (KELCIVETPA…KVSRIAHGIP (96 aa)).

It belongs to the RecR family.

In terms of biological role, may play a role in DNA repair. It seems to be involved in an RecBC-independent recombinational process of DNA repair. It may act with RecF and RecO. This Saccharophagus degradans (strain 2-40 / ATCC 43961 / DSM 17024) protein is Recombination protein RecR.